Here is a 312-residue protein sequence, read N- to C-terminus: Glyoxylate/hydroxypyruvate reductase A (312 aa).

Arg-227 is a catalytic residue. His-275 functions as the Proton donor in the catalytic mechanism.

Belongs to the D-isomer specific 2-hydroxyacid dehydrogenase family. GhrA subfamily.

Its subcellular location is the cytoplasm. It carries out the reaction glycolate + NADP(+) = glyoxylate + NADPH + H(+). It catalyses the reaction (R)-glycerate + NAD(+) = 3-hydroxypyruvate + NADH + H(+). The catalysed reaction is (R)-glycerate + NADP(+) = 3-hydroxypyruvate + NADPH + H(+). Its function is as follows. Catalyzes the NADPH-dependent reduction of glyoxylate and hydroxypyruvate into glycolate and glycerate, respectively. This is Glyoxylate/hydroxypyruvate reductase A from Escherichia coli O81 (strain ED1a).